The sequence spans 218 residues: Interleukin-37 (218 aa).

The interval 1–40 is disordered; it reads MSFVGENSGVKMGSEDWEKDEPQCCLEDPAGSPLEPGPSL. Positions 1–45 are cleaved as a propeptide — removed in mature form; sequence MSFVGENSGVKMGSEDWEKDEPQCCLEDPAGSPLEPGPSLPTMNF. Residues 13-22 show a composition bias toward basic and acidic residues; the sequence is GSEDWEKDEP.

Belongs to the IL-1 family. In terms of assembly, interacts with SMAD3. Binds IL18R1, but not to IL1R1, with lower affinity than IL18, and does not seem to act as a receptor antagonist for IL18. Interacts with cargo receptor TMED10; the interaction mediates the translocation from the cytoplasm into the ERGIC (endoplasmic reticulum-Golgi intermediate compartment) and thereby secretion. In terms of processing, proteolytically converted to the mature form by CASP1. In general, low constitutive expression, if any, in healthy tissues; high expression in inflammatory counterparts, including in synovial tissues from individuals with active rheumatoid arthritis. Isoform A, isoform B and isoform C are expressed in testis, colon, placenta, lung and lymph node. Isoform D and isoform E were found only in testis and bone marrow. Whereas only isoform A is found in brain, only isoform B in kidney and only isoform C in heart.

Its subcellular location is the cytoplasm. The protein resides in the cytosol. The protein localises to the nucleus. It localises to the secreted. In terms of biological role, immune regulatory cytokine that acts as a suppressor of innate inflammatory and immune responses involved in curbing excessive inflammation. Signaling can occur via two mechanisms, intracellularly through nuclear translocation with SMAD3 and extracellularly after secretion and binding to its receptor composed of IL18R1 and IL18RAP. Suppresses, or reduces, pro-inflammatory cytokine production, including IL1A and IL6, as well as CCL12, CSF1, CSF2, CXCL13, IL1B, IL23A and IL1RN, but spares anti-inflammatory cytokines. Inhibits dendritic cell activation. The protein is Interleukin-37 of Homo sapiens (Human).